A 303-amino-acid chain; its full sequence is N-acetyl-D-glucosamine kinase (303 aa).

ATP contacts are provided by residues 4–11 (GFDIGGTK) and 133–140 (GVGGGLIF). Zn(2+)-binding residues include His-157, Cys-177, Cys-179, and Cys-184.

It belongs to the ROK (NagC/XylR) family. NagK subfamily.

It catalyses the reaction N-acetyl-D-glucosamine + ATP = N-acetyl-D-glucosamine 6-phosphate + ADP + H(+). The protein operates within cell wall biogenesis; peptidoglycan recycling. Its function is as follows. Catalyzes the phosphorylation of N-acetyl-D-glucosamine (GlcNAc) derived from cell-wall degradation, yielding GlcNAc-6-P. This Escherichia coli O81 (strain ED1a) protein is N-acetyl-D-glucosamine kinase.